The following is a 263-amino-acid chain: MDYWFAEIVTIGNEVLSGKTVNTNASHIGRRLTSLGFTVRRITVVMDDIDEIVSGFREAIDRKPKVIVSSGGLGPTWDDKTAEGLAKALGVNLELNKTAFDMILEKYTKRNIPLTEERKKMAYLPYGAMAVENNEGIAPGIYIYHNNIDILATPGVPREMENVLENFINKMLRNKPNLKYLEDFIYVENVMESALAPYVKELVKKYDIYIKTHPKSYELLRPILEIQIAGSGREEEIKVKIEKVKNELLDAIKKLNGIIRNSL.

Belongs to the CinA family.

The sequence is that of Protein M1627_2099 from Saccharolobus islandicus (strain M.16.27) (Sulfolobus islandicus).